We begin with the raw amino-acid sequence, 505 residues long: Glutamate--tRNA ligase (505 aa).

Positions 12-22 (PSPTGDPHVGT) match the 'HIGH' region motif. The 'KMSKS' region motif lies at 253-257 (KLSKR). K256 contacts ATP.

Belongs to the class-I aminoacyl-tRNA synthetase family. Glutamate--tRNA ligase type 1 subfamily. As to quaternary structure, monomer.

Its subcellular location is the cytoplasm. The catalysed reaction is tRNA(Glu) + L-glutamate + ATP = L-glutamyl-tRNA(Glu) + AMP + diphosphate. Functionally, catalyzes the attachment of glutamate to tRNA(Glu) in a two-step reaction: glutamate is first activated by ATP to form Glu-AMP and then transferred to the acceptor end of tRNA(Glu). This is Glutamate--tRNA ligase from Chlamydophila psittaci (strain ATCC VR-125 / 6BC) (Chlamydia psittaci).